The sequence spans 77 residues: Large ribosomal subunit protein eL20 (77 aa).

It belongs to the eukaryotic ribosomal protein eL20 family. As to quaternary structure, part of the 50S ribosomal subunit. Binds 23S rRNA.

The chain is Large ribosomal subunit protein eL20 from Thermococcus onnurineus (strain NA1).